Consider the following 211-residue polypeptide: Uridine kinase (211 aa).

Residue 12-19 (GGSGSGKT) participates in ATP binding.

The protein belongs to the uridine kinase family.

It localises to the cytoplasm. The enzyme catalyses uridine + ATP = UMP + ADP + H(+). It carries out the reaction cytidine + ATP = CMP + ADP + H(+). The protein operates within pyrimidine metabolism; CTP biosynthesis via salvage pathway; CTP from cytidine: step 1/3. It functions in the pathway pyrimidine metabolism; UMP biosynthesis via salvage pathway; UMP from uridine: step 1/1. The polypeptide is Uridine kinase (Geobacillus kaustophilus (strain HTA426)).